Reading from the N-terminus, the 376-residue chain is Dehydrogenase/reductase SDR family member FEY (376 aa).

Residue S2 is modified to N-acetylserine. 61 to 85 (VVTGSTSGIGRETARQLAEAGAHVV) contacts NAD(+). Substrate is bound at residue S199. Catalysis depends on Y227, which acts as the Proton acceptor.

It belongs to the short-chain dehydrogenases/reductases (SDR) family. Expressed in roots, stems, leaves and flowers and, at lower levels, in siliques.

In terms of biological role, putative oxidoreductase. Required for vegetative shoot apex development, especially during leaf positioning and for shoot apical meristem (SAM) maintenance. This is Dehydrogenase/reductase SDR family member FEY from Arabidopsis thaliana (Mouse-ear cress).